Here is a 239-residue protein sequence, read N- to C-terminus: Ribonuclease PH (239 aa).

Phosphate contacts are provided by residues R86 and 124 to 126 (GTR).

Belongs to the RNase PH family. As to quaternary structure, homohexameric ring arranged as a trimer of dimers.

The catalysed reaction is tRNA(n+1) + phosphate = tRNA(n) + a ribonucleoside 5'-diphosphate. Phosphorolytic 3'-5' exoribonuclease that plays an important role in tRNA 3'-end maturation. Removes nucleotide residues following the 3'-CCA terminus of tRNAs; can also add nucleotides to the ends of RNA molecules by using nucleoside diphosphates as substrates, but this may not be physiologically important. Probably plays a role in initiation of 16S rRNA degradation (leading to ribosome degradation) during starvation. The polypeptide is Ribonuclease PH (Rhizobium johnstonii (strain DSM 114642 / LMG 32736 / 3841) (Rhizobium leguminosarum bv. viciae)).